Here is a 489-residue protein sequence, read N- to C-terminus: Protein DETOXIFICATION 26 (489 aa).

A run of 12 helical transmembrane segments spans residues 42–62, 75–95, 125–145, 157–177, 190–210, 217–237, 271–291, 300–320, 342–362, 385–405, 416–436, and 442–462; these read IWYI…ILII, LAAI…LLLG, IILF…TPIL, LTGT…FFFP, VIAI…WFFV, IIGT…ILFL, IMLC…GNLV, LSIC…FFAG, IVSI…IVIF, VLLA…GVAV, INLG…GWIF, and GIWA…LIII.

The protein belongs to the multi antimicrobial extrusion (MATE) (TC 2.A.66.1) family.

It localises to the membrane. This chain is Protein DETOXIFICATION 26, found in Arabidopsis thaliana (Mouse-ear cress).